The sequence spans 359 residues: Chorismate synthase (359 aa).

Position 47 (Arg47) interacts with NADP(+). FMN contacts are provided by residues 123 to 125 (RSS), Gly283, 298 to 302 (KPTSS), and Arg326.

Belongs to the chorismate synthase family. In terms of assembly, homotetramer. The cofactor is FMNH2.

The catalysed reaction is 5-O-(1-carboxyvinyl)-3-phosphoshikimate = chorismate + phosphate. Its pathway is metabolic intermediate biosynthesis; chorismate biosynthesis; chorismate from D-erythrose 4-phosphate and phosphoenolpyruvate: step 7/7. Catalyzes the anti-1,4-elimination of the C-3 phosphate and the C-6 proR hydrogen from 5-enolpyruvylshikimate-3-phosphate (EPSP) to yield chorismate, which is the branch point compound that serves as the starting substrate for the three terminal pathways of aromatic amino acid biosynthesis. This reaction introduces a second double bond into the aromatic ring system. This Chlamydia abortus (strain DSM 27085 / S26/3) (Chlamydophila abortus) protein is Chorismate synthase.